The sequence spans 309 residues: Ribonuclease Z (309 aa).

Positions 63, 65, 67, 68, 145, 216, and 274 each coordinate Zn(2+). The active-site Proton acceptor is the aspartate 67.

Belongs to the RNase Z family. As to quaternary structure, homodimer. Zn(2+) serves as cofactor.

It catalyses the reaction Endonucleolytic cleavage of RNA, removing extra 3' nucleotides from tRNA precursor, generating 3' termini of tRNAs. A 3'-hydroxy group is left at the tRNA terminus and a 5'-phosphoryl group is left at the trailer molecule.. Its function is as follows. Zinc phosphodiesterase, which displays some tRNA 3'-processing endonuclease activity. Probably involved in tRNA maturation, by removing a 3'-trailer from precursor tRNA. In Streptococcus agalactiae serotype Ia (strain ATCC 27591 / A909 / CDC SS700), this protein is Ribonuclease Z.